The sequence spans 121 residues: Ribosome-binding factor A (121 aa).

This sequence belongs to the RbfA family. Monomer. Binds 30S ribosomal subunits, but not 50S ribosomal subunits or 70S ribosomes.

It localises to the cytoplasm. Its function is as follows. One of several proteins that assist in the late maturation steps of the functional core of the 30S ribosomal subunit. Associates with free 30S ribosomal subunits (but not with 30S subunits that are part of 70S ribosomes or polysomes). Required for efficient processing of 16S rRNA. May interact with the 5'-terminal helix region of 16S rRNA. In Oenococcus oeni (strain ATCC BAA-331 / PSU-1), this protein is Ribosome-binding factor A.